Here is a 160-residue protein sequence, read N- to C-terminus: Cytochrome b6-f complex subunit 4 (160 aa).

3 helical membrane-spanning segments follow: residues 36–56 (LLYV…GLAV), 95–115 (LLGV…PFIE), and 131–151 (LVFI…CLPI).

The protein belongs to the cytochrome b family. PetD subfamily. The 4 large subunits of the cytochrome b6-f complex are cytochrome b6, subunit IV (17 kDa polypeptide, petD), cytochrome f and the Rieske protein, while the 4 small subunits are petG, petL, petM and petN. The complex functions as a dimer.

The protein resides in the plastid. The protein localises to the chloroplast thylakoid membrane. Functionally, component of the cytochrome b6-f complex, which mediates electron transfer between photosystem II (PSII) and photosystem I (PSI), cyclic electron flow around PSI, and state transitions. The polypeptide is Cytochrome b6-f complex subunit 4 (Trieres chinensis (Marine centric diatom)).